A 418-amino-acid chain; its full sequence is CinA-like protein (418 aa).

This sequence belongs to the CinA family.

The sequence is that of CinA-like protein from Leptospira interrogans serogroup Icterohaemorrhagiae serovar Lai (strain 56601).